Here is a 145-residue protein sequence, read N- to C-terminus: uncharacterized protein (145 aa).

Residues 78–145 (KLQIVAKDRI…DVVEKISILW (68 aa)) form the ACT domain.

This is an uncharacterized protein from Methanocaldococcus jannaschii (strain ATCC 43067 / DSM 2661 / JAL-1 / JCM 10045 / NBRC 100440) (Methanococcus jannaschii).